The sequence spans 85 residues: Small ribosomal subunit protein bS16 (85 aa).

It belongs to the bacterial ribosomal protein bS16 family.

In Clostridium novyi (strain NT), this protein is Small ribosomal subunit protein bS16.